A 470-amino-acid chain; its full sequence is Meiosis-specific with OB domain-containing protein (470 aa).

The segment at residues Ile-167–Arg-272 is a DNA-binding region (OB).

Belongs to the MEIOB family. Component of a multiprotein complex with RPA2 and SPATA22. Interacts with SPATA22. Interacts with the complex BRME1:HSF2BP:BRCA2.

The protein resides in the cytoplasm. It is found in the nucleus. The protein localises to the chromosome. Its function is as follows. Single-stranded DNA-binding protein required for homologous recombination in meiosis I. Required for double strand breaks (DSBs) repair and crossover formation and promotion of faithful and complete synapsis. Not required for the initial loading of recombinases but required to maintain a proper number of RAD51 and DMC1 foci after the zygotene stage. May act by ensuring the stabilization of recombinases, which is required for successful homology search and meiotic recombination. Displays Single-stranded DNA 3'-5' exonuclease activity in vitro. The chain is Meiosis-specific with OB domain-containing protein from Rattus norvegicus (Rat).